The following is a 430-amino-acid chain: MTTIAKILAREILDSRGNPTLEAEVTLDDGSFGRAAVPSGASTGTKEAVELRDGDKTRYLGKGVRHAVDNVNGTIAETLKNFDAADQQGLDRRLIDLDGTENKGRLGANALLGVSLAAAHAVAASRKQPLWQYLSTITESDVALPVPMMNIINGGAHADNNVDFQEFMVLPVGCSSFSEALRAGTEIFYSLKSVLKGHGLSTAVGDEGGFAPDFRSNVEALDTILEAIGKAGYTAGEDILLGLDVASSEFYDNGKYNLVGENKRLTSEQFVDFLADWVAQYPIISIEDGLAEDDWAGWKLLTDRVGKHVQLVGDDLFVTNPKIFKQGIDSGTANAILIKVNQIGTLTETLEAIAMAHAANYASIVSHRSGETEDTTIADIAVATTATQIKTGSLCRSDRVAKYNQLLRIEQALGSDARYAGRDAFVSIKR.

Glutamine 165 contacts (2R)-2-phosphoglycerate. The active-site Proton donor is the glutamate 207. The Mg(2+) site is built by aspartate 244, glutamate 287, and aspartate 314. Lysine 339, arginine 368, serine 369, and lysine 390 together coordinate (2R)-2-phosphoglycerate. The Proton acceptor role is filled by lysine 339.

This sequence belongs to the enolase family. As to quaternary structure, component of the RNA degradosome, a multiprotein complex involved in RNA processing and mRNA degradation. Mg(2+) is required as a cofactor.

The protein localises to the cytoplasm. The protein resides in the secreted. It is found in the cell surface. The catalysed reaction is (2R)-2-phosphoglycerate = phosphoenolpyruvate + H2O. It participates in carbohydrate degradation; glycolysis; pyruvate from D-glyceraldehyde 3-phosphate: step 4/5. Functionally, catalyzes the reversible conversion of 2-phosphoglycerate (2-PG) into phosphoenolpyruvate (PEP). It is essential for the degradation of carbohydrates via glycolysis. This chain is Enolase, found in Xanthomonas oryzae pv. oryzae (strain MAFF 311018).